Here is a 299-residue protein sequence, read N- to C-terminus: GTPase Era (299 aa).

The Era-type G domain maps to 5-175 (RSGFVCFVGR…TNVLVSQLPP (171 aa)). The G1 stretch occupies residues 13–20 (GRPNTGKS). GTP is bound at residue 13–20 (GRPNTGKS). Positions 39–43 (QTTRH) are G2. Residues 60 to 63 (DTPG) form a G3 region. Residues 60-64 (DTPGL) and 124-127 (TKID) each bind GTP. The segment at 124-127 (TKID) is G4. A G5 region spans residues 154–156 (VSA). Positions 206-285 (VRDELPHSLA…YLDLRVKIAK (80 aa)) constitute a KH type-2 domain.

It belongs to the TRAFAC class TrmE-Era-EngA-EngB-Septin-like GTPase superfamily. Era GTPase family. As to quaternary structure, monomer. Stays in the monomer conformation, irrespective of the presence of GTP.

It localises to the cell envelope. The protein localises to the secreted. The protein resides in the cell wall. Its activity is regulated as follows. Co-purified with RNA upon overexpression in E.coli, but RNAs do not appear to influence the GTPase activity. In terms of biological role, exhibits GTPase activity. Binds RNA but is probably not involved in ribosome assembly in mycobacteria. Cannot use ATP. This is GTPase Era from Mycolicibacterium smegmatis (strain ATCC 700084 / mc(2)155) (Mycobacterium smegmatis).